A 363-amino-acid chain; its full sequence is Uroporphyrinogen decarboxylase (363 aa).

Substrate-binding positions include 36 to 40, aspartate 85, tyrosine 160, serine 215, and histidine 339; that span reads RQAGR.

It belongs to the uroporphyrinogen decarboxylase family. In terms of assembly, homodimer.

The protein resides in the cytoplasm. The catalysed reaction is uroporphyrinogen III + 4 H(+) = coproporphyrinogen III + 4 CO2. It participates in porphyrin-containing compound metabolism; protoporphyrin-IX biosynthesis; coproporphyrinogen-III from 5-aminolevulinate: step 4/4. Catalyzes the decarboxylation of four acetate groups of uroporphyrinogen-III to yield coproporphyrinogen-III. This is Uroporphyrinogen decarboxylase from Saccharopolyspora erythraea (strain ATCC 11635 / DSM 40517 / JCM 4748 / NBRC 13426 / NCIMB 8594 / NRRL 2338).